Consider the following 459-residue polypeptide: MVKEKEYYERLGVKPDCTEDELKKAYRKMAVKYHPDKNQGPGKDAAEAKFKDISEAYEVLSDPEKRKMYDSYGSEGMKESGFHASSAEDLFSHFFGAGGGGGGFSFGGGGGDDFGGFSFGNMGGMGGMGGMGGGHKKRRKGEDIEHEMNRSLEELYNGKLVKISISRDEVCKTCKGSGSNKPGVTTTCPTCNGSRYVFQKKQVGPGMIQQVQTACHTCHGTGEKIKEEDKCKECKGKRVIQGKKIVQFQVEKGTRDGERIMLQGQGSEYPGVPPGDVIITIREKPNVNFKRNGDNLIYTKRLKLLDSIAGSQFIINTLDQRKLWVNHEKGDIIKQGDMRYIENEGMPIKGTSRKGKLIIAFDIEYPSNLTNDDIEKLSKILPKAATPSVSKSDCKSVGLSKVNFNTNEQSSHGGAGGAYQQHGGAYGHQKQQQQGFNPADFGAQFGGGGPQQAQQCQQQ.

One can recognise a J domain in the interval 6-73; it reads EYYERLGVKP…EKRKMYDSYG (68 aa). A CR-type zinc finger spans residues 158–243; sequence GKLVKISISR…CKGKRVIQGK (86 aa). Zn(2+) contacts are provided by Cys171, Cys174, Cys188, Cys191, Cys215, Cys218, Cys231, and Cys234. 4 CXXCXGXG motif repeats span residues 171 to 178, 188 to 195, 215 to 222, and 231 to 238; these read CKTCKGSG, CPTCNGSR, CHTCHGTG, and CKECKGKR. The segment at 405–459 is disordered; that stretch reads NTNEQSSHGGAGGAYQQHGGAYGHQKQQQQGFNPADFGAQFGGGGPQQAQQCQQQ. The segment covering 418-435 has biased composition (low complexity); sequence AYQQHGGAYGHQKQQQQG. Position 456 is a cysteine methyl ester (Cys456). A lipid anchor (S-farnesyl cysteine) is attached at Cys456. The propeptide at 457-459 is removed in mature form; it reads QQQ.

Its subcellular location is the membrane. It is found in the cytoplasm. The protein localises to the microsome. The protein resides in the mitochondrion. It localises to the nucleus. Its subcellular location is the perinuclear region. Functionally, co-chaperone for Hsp70 family members. Plays a role in protein transport into mitochondria and in the regulation of apoptosis via its role as co-chaperone. The chain is DnaJ homolog subfamily A member 1 homolog (dnaja1) from Dictyostelium discoideum (Social amoeba).